The primary structure comprises 191 residues: Protein Ves (191 aa).

Belongs to the Ves family.

The sequence is that of Protein Ves from Escherichia coli (strain SMS-3-5 / SECEC).